The primary structure comprises 332 residues: Holliday junction branch migration complex subunit RuvB (332 aa).

Residues 1–181 are large ATPase domain (RuvB-L); that stretch reads MSRILDNEMM…FGITGHMEYY (181 aa). ATP contacts are provided by residues leucine 20, arginine 21, glycine 62, lysine 65, threonine 66, threonine 67, 128 to 130, arginine 171, tyrosine 181, and arginine 218; that span reads EDF. Threonine 66 serves as a coordination point for Mg(2+). The interval 182 to 252 is small ATPAse domain (RuvB-S); it reads AHADLTEIVE…ITDKALTMLD (71 aa). The tract at residues 255-332 is head domain (RuvB-H); the sequence is HEGLDYVDQK…EHLGYEYSEK (78 aa). Residues arginine 291, arginine 310, arginine 312, and arginine 315 each contribute to the DNA site.

This sequence belongs to the RuvB family. Homohexamer. Forms an RuvA(8)-RuvB(12)-Holliday junction (HJ) complex. HJ DNA is sandwiched between 2 RuvA tetramers; dsDNA enters through RuvA and exits via RuvB. An RuvB hexamer assembles on each DNA strand where it exits the tetramer. Each RuvB hexamer is contacted by two RuvA subunits (via domain III) on 2 adjacent RuvB subunits; this complex drives branch migration. In the full resolvosome a probable DNA-RuvA(4)-RuvB(12)-RuvC(2) complex forms which resolves the HJ.

It is found in the cytoplasm. The catalysed reaction is ATP + H2O = ADP + phosphate + H(+). In terms of biological role, the RuvA-RuvB-RuvC complex processes Holliday junction (HJ) DNA during genetic recombination and DNA repair, while the RuvA-RuvB complex plays an important role in the rescue of blocked DNA replication forks via replication fork reversal (RFR). RuvA specifically binds to HJ cruciform DNA, conferring on it an open structure. The RuvB hexamer acts as an ATP-dependent pump, pulling dsDNA into and through the RuvAB complex. RuvB forms 2 homohexamers on either side of HJ DNA bound by 1 or 2 RuvA tetramers; 4 subunits per hexamer contact DNA at a time. Coordinated motions by a converter formed by DNA-disengaged RuvB subunits stimulates ATP hydrolysis and nucleotide exchange. Immobilization of the converter enables RuvB to convert the ATP-contained energy into a lever motion, pulling 2 nucleotides of DNA out of the RuvA tetramer per ATP hydrolyzed, thus driving DNA branch migration. The RuvB motors rotate together with the DNA substrate, which together with the progressing nucleotide cycle form the mechanistic basis for DNA recombination by continuous HJ branch migration. Branch migration allows RuvC to scan DNA until it finds its consensus sequence, where it cleaves and resolves cruciform DNA. The chain is Holliday junction branch migration complex subunit RuvB from Streptococcus pneumoniae serotype 19F (strain G54).